We begin with the raw amino-acid sequence, 607 residues long: Dolichyl-diphosphooligosaccharide--protein glycosyltransferase subunit 1 (607 aa).

The signal sequence occupies residues 1 to 23 (MEAPAARLFLLLLLGTWAPAPGS). Topologically, residues 24–434 (ASSEAPPLIN…VVHYTFNKVL (411 aa)) are lumenal. Lys-187 carries the N6-acetyllysine modification. An N-linked (GlcNAc...) asparagine glycan is attached at Asn-299. Residues 435–455 (MLQEPLLVVAAFYILFFTVII) form a helical membrane-spanning segment. The Cytoplasmic portion of the chain corresponds to 456-607 (YVRLDFSITK…TKIDHILDAL (152 aa)). N6-acetyllysine; alternate is present on Lys-538. A Glycyl lysine isopeptide (Lys-Gly) (interchain with G-Cter in SUMO2); alternate cross-link involves residue Lys-538.

This sequence belongs to the OST1 family. As to quaternary structure, component of the oligosaccharyltransferase (OST) complex. OST exists in two different complex forms which contain common core subunits RPN1, RPN2, OST48, OST4, DAD1 and TMEM258, either STT3A or STT3B as catalytic subunits, and form-specific accessory subunits. STT3A complex assembly occurs through the formation of 3 subcomplexes. Subcomplex 1 contains RPN1 and TMEM258, subcomplex 2 contains the STT3A-specific subunits STT3A, DC2/OSTC, and KCP2 as well as the core subunit OST4, and subcomplex 3 contains RPN2, DAD1, and OST48. The STT3A complex can form stable complexes with the Sec61 complex or with both the Sec61 and TRAP complexes. Interacts with TMEM35A/NACHO. In terms of processing, ubiquitinated by the ECS(ASB11) complex. Post-translationally, ufmylated by UFL1 in response to endoplasmic reticulum stress, promoting reticulophagy of endoplasmic reticulum sheets.

The protein resides in the endoplasmic reticulum membrane. The protein operates within protein modification; protein glycosylation. Functionally, subunit of the oligosaccharyl transferase (OST) complex that catalyzes the initial transfer of a defined glycan (Glc(3)Man(9)GlcNAc(2) in eukaryotes) from the lipid carrier dolichol-pyrophosphate to an asparagine residue within an Asn-X-Ser/Thr consensus motif in nascent polypeptide chains, the first step in protein N-glycosylation. N-glycosylation occurs cotranslationally and the complex associates with the Sec61 complex at the channel-forming translocon complex that mediates protein translocation across the endoplasmic reticulum (ER). All subunits are required for a maximal enzyme activity. The protein is Dolichyl-diphosphooligosaccharide--protein glycosyltransferase subunit 1 of Pongo abelii (Sumatran orangutan).